A 406-amino-acid polypeptide reads, in one-letter code: NADH-quinone oxidoreductase subunit D (406 aa).

This sequence belongs to the complex I 49 kDa subunit family. In terms of assembly, NDH-1 is composed of 14 different subunits. Subunits NuoB, C, D, E, F, and G constitute the peripheral sector of the complex.

The protein resides in the cell inner membrane. It catalyses the reaction a quinone + NADH + 5 H(+)(in) = a quinol + NAD(+) + 4 H(+)(out). In terms of biological role, NDH-1 shuttles electrons from NADH, via FMN and iron-sulfur (Fe-S) centers, to quinones in the respiratory chain. The immediate electron acceptor for the enzyme in this species is believed to be ubiquinone. Couples the redox reaction to proton translocation (for every two electrons transferred, four hydrogen ions are translocated across the cytoplasmic membrane), and thus conserves the redox energy in a proton gradient. The protein is NADH-quinone oxidoreductase subunit D of Acidiphilium cryptum (strain JF-5).